Reading from the N-terminus, the 232-residue chain is Ribonuclease 3 (232 aa).

The RNase III domain occupies Leu6–Gly133. Glu46 lines the Mg(2+) pocket. Asp50 is a catalytic residue. Mg(2+) contacts are provided by Asp119 and Glu122. Glu122 is an active-site residue. Residues Asp160–Gly229 form the DRBM domain.

It belongs to the ribonuclease III family. Homodimer. Requires Mg(2+) as cofactor.

The protein localises to the cytoplasm. It carries out the reaction Endonucleolytic cleavage to 5'-phosphomonoester.. Digests double-stranded RNA. Involved in the processing of primary rRNA transcript to yield the immediate precursors to the large and small rRNAs (23S and 16S). Processes some mRNAs, and tRNAs when they are encoded in the rRNA operon. Processes pre-crRNA and tracrRNA of type II CRISPR loci if present in the organism. In Clostridium beijerinckii (strain ATCC 51743 / NCIMB 8052) (Clostridium acetobutylicum), this protein is Ribonuclease 3.